A 301-amino-acid polypeptide reads, in one-letter code: GTPase Era (301 aa).

The Era-type G domain occupies 7–175 (YCGFIAIVGR…AAIVRKHLPE (169 aa)). The segment at 15-22 (GRPNVGKS) is G1. 15 to 22 (GRPNVGKS) is a GTP binding site. Residues 41 to 45 (QTTRH) form a G2 region. Positions 62 to 65 (DTPG) are G3. Residues 62-66 (DTPGL) and 124-127 (NKVD) each bind GTP. Residues 124–127 (NKVD) are G4. Positions 154-156 (ISA) are G5. Residues 206–283 (LGAELPYSVT…HLELWVKVKS (78 aa)) form the KH type-2 domain.

It belongs to the TRAFAC class TrmE-Era-EngA-EngB-Septin-like GTPase superfamily. Era GTPase family. In terms of assembly, monomer.

The protein resides in the cytoplasm. The protein localises to the cell inner membrane. An essential GTPase that binds both GDP and GTP, with rapid nucleotide exchange. Plays a role in 16S rRNA processing and 30S ribosomal subunit biogenesis and possibly also in cell cycle regulation and energy metabolism. The sequence is that of GTPase Era from Cronobacter sakazakii (strain ATCC BAA-894) (Enterobacter sakazakii).